The primary structure comprises 541 residues: Pseudokinase FAM20A (541 aa).

The signal sequence occupies residues 1–33 (MPGLRRDRLLTLLLLGALLSADLYFHLWPQVQR). A disordered region spans residues 38-90 (RERPRGCPCTGRASSLARDSAAAASDPGTIVHNFSRTEPRTEPAGGSHSGSSS). Positions 49–63 (RASSLARDSAAAASD) are enriched in low complexity. N-linked (GlcNAc...) asparagine glycans are attached at residues asparagine 70, asparagine 145, and asparagine 287. Intrachain disulfides connect cysteine 314-cysteine 330, cysteine 319-cysteine 323, cysteine 378-cysteine 452, and cysteine 453-cysteine 512. Residue asparagine 388 is glycosylated (N-linked (GlcNAc...) asparagine). The N-linked (GlcNAc...) asparagine glycan is linked to asparagine 538.

It belongs to the FAM20 family. In terms of assembly, interacts with FAM20C; probably forming a heterotetramer of 2 subunits of FAM20A and 2 subunits of FAM20C. In terms of processing, N-glycosylated. In terms of tissue distribution, highly expressed in lung and liver. Intermediate levels in thymus and ovary.

The protein resides in the secreted. It localises to the golgi apparatus. It is found in the endoplasmic reticulum. Its function is as follows. Pseudokinase that acts as an allosteric activator of the Golgi serine/threonine protein kinase FAM20C and is involved in biomineralization of teeth. Forms a complex with FAM20C and increases the ability of FAM20C to phosphorylate the proteins that form the 'matrix' that guides the deposition of the enamel minerals. The polypeptide is Pseudokinase FAM20A (Homo sapiens (Human)).